The chain runs to 399 residues: Imidazolonepropionase (399 aa).

Positions 74 and 76 each coordinate Fe(3+). Zn(2+)-binding residues include His74 and His76. 4-imidazolone-5-propanoate is bound by residues Arg83, Tyr146, and His176. Tyr146 is an N-formimidoyl-L-glutamate binding site. Position 238 (His238) interacts with Fe(3+). His238 contacts Zn(2+). Gln241 provides a ligand contact to 4-imidazolone-5-propanoate. Residue Asp312 participates in Fe(3+) binding. Asp312 is a Zn(2+) binding site. Asn314 and Gly316 together coordinate N-formimidoyl-L-glutamate. Ser317 is a 4-imidazolone-5-propanoate binding site.

Belongs to the metallo-dependent hydrolases superfamily. HutI family. Requires Zn(2+) as cofactor. Fe(3+) is required as a cofactor.

The protein resides in the cytoplasm. It carries out the reaction 4-imidazolone-5-propanoate + H2O = N-formimidoyl-L-glutamate. It functions in the pathway amino-acid degradation; L-histidine degradation into L-glutamate; N-formimidoyl-L-glutamate from L-histidine: step 3/3. Catalyzes the hydrolytic cleavage of the carbon-nitrogen bond in imidazolone-5-propanoate to yield N-formimidoyl-L-glutamate. It is the third step in the universal histidine degradation pathway. The polypeptide is Imidazolonepropionase (Deinococcus deserti (strain DSM 17065 / CIP 109153 / LMG 22923 / VCD115)).